A 454-amino-acid polypeptide reads, in one-letter code: MSLEIVILAAGQGTRMRSALPKVLHPIAGKPMLGHVIDCARQLQPERIHVVIGHGADLVRERMAADDLNFVLQAEQLGTGHAVAQALPFLSADQVLILYGDVPLIQLDTLQRLLAQVTPDQLSLLTVDMLDPTGYGRIVRDDQGAVQAIVEHKDATPAQRQIGEINTGILAVPGKRLADWLGRLSNDNAQGEYYLTDVIAMAVGDGLVVASAQPLDAMEVQGVNDRMQQAQLERHYQRLRAEELMRQGVTLLDPQRLDVRGEISVGRDVLIDVNVVLEGRVVIEDDVHIGPNCVIRDSVLRRGAVIKANSHLEGAELGEGSDAGPFARLRPGSVLGARAHVGNFVELKNARLGEGSKAGHLSYLGDAELGANCNIGAGTITCNYDGANKFRTELGDDVFIGSNNSLVAPLKIGDGATTAAGSTITHEVPAKNLAFGRARQKNLENWKRPEKIKK.

Positions 1-226 are pyrophosphorylase; sequence MSLEIVILAA…AMEVQGVNDR (226 aa). UDP-N-acetyl-alpha-D-glucosamine contacts are provided by residues 8–11, K22, Q73, 78–79, 99–101, G136, E151, N166, and N224; these read LAAG, GT, and YGD. Residue D101 participates in Mg(2+) binding. N224 contacts Mg(2+). Residues 227-247 are linker; the sequence is MQQAQLERHYQRLRAEELMRQ. The interval 248–454 is N-acetyltransferase; that stretch reads GVTLLDPQRL…NWKRPEKIKK (207 aa). 2 residues coordinate UDP-N-acetyl-alpha-D-glucosamine: R330 and K348. H360 functions as the Proton acceptor in the catalytic mechanism. UDP-N-acetyl-alpha-D-glucosamine is bound by residues Y363 and N374. Residues A377, 383–384, S402, A420, and R437 each bind acetyl-CoA; that span reads NY.

The protein in the N-terminal section; belongs to the N-acetylglucosamine-1-phosphate uridyltransferase family. In the C-terminal section; belongs to the transferase hexapeptide repeat family. Homotrimer. The cofactor is Mg(2+).

It is found in the cytoplasm. The enzyme catalyses alpha-D-glucosamine 1-phosphate + acetyl-CoA = N-acetyl-alpha-D-glucosamine 1-phosphate + CoA + H(+). The catalysed reaction is N-acetyl-alpha-D-glucosamine 1-phosphate + UTP + H(+) = UDP-N-acetyl-alpha-D-glucosamine + diphosphate. It functions in the pathway nucleotide-sugar biosynthesis; UDP-N-acetyl-alpha-D-glucosamine biosynthesis; N-acetyl-alpha-D-glucosamine 1-phosphate from alpha-D-glucosamine 6-phosphate (route II): step 2/2. It participates in nucleotide-sugar biosynthesis; UDP-N-acetyl-alpha-D-glucosamine biosynthesis; UDP-N-acetyl-alpha-D-glucosamine from N-acetyl-alpha-D-glucosamine 1-phosphate: step 1/1. The protein operates within bacterial outer membrane biogenesis; LPS lipid A biosynthesis. Functionally, catalyzes the last two sequential reactions in the de novo biosynthetic pathway for UDP-N-acetylglucosamine (UDP-GlcNAc). The C-terminal domain catalyzes the transfer of acetyl group from acetyl coenzyme A to glucosamine-1-phosphate (GlcN-1-P) to produce N-acetylglucosamine-1-phosphate (GlcNAc-1-P), which is converted into UDP-GlcNAc by the transfer of uridine 5-monophosphate (from uridine 5-triphosphate), a reaction catalyzed by the N-terminal domain. This chain is Bifunctional protein GlmU, found in Pseudomonas aeruginosa (strain LESB58).